The sequence spans 102 residues: MDLKKLSGSELLIELEKLNCDLAIPWKIEDEKLSKTFKFKNFMQAFAFMTQSALYAEKKNHHPEWFNIYNKVVIQLTTHDVAGISFKDFDLAKKMESFIPHF.

The protein belongs to the pterin-4-alpha-carbinolamine dehydratase family.

It catalyses the reaction (4aS,6R)-4a-hydroxy-L-erythro-5,6,7,8-tetrahydrobiopterin = (6R)-L-erythro-6,7-dihydrobiopterin + H2O. The protein is Putative pterin-4-alpha-carbinolamine dehydratase of Psychromonas ingrahamii (strain DSM 17664 / CCUG 51855 / 37).